Consider the following 362-residue polypeptide: Peptide chain release factor 1 (362 aa).

N5-methylglutamine is present on Gln-235.

Belongs to the prokaryotic/mitochondrial release factor family. Methylated by PrmC. Methylation increases the termination efficiency of RF1.

It is found in the cytoplasm. Peptide chain release factor 1 directs the termination of translation in response to the peptide chain termination codons UAG and UAA. This is Peptide chain release factor 1 from Variovorax paradoxus (strain S110).